The following is a 375-amino-acid chain: Alcohol dehydrogenase 1 (375 aa).

An N-acetylserine modification is found at Ser-2. Residues Cys-47, His-68, Cys-98, Cys-101, Cys-104, Cys-112, and Cys-175 each contribute to the Zn(2+) site. NAD(+) is bound by residues 200-205, Asp-224, and Lys-229; that span reads WSGRVG. The residue at position 234 (Lys-234) is an N6-succinyllysine. Residue 293–295 coordinates NAD(+); the sequence is VGV. N6-succinyllysine is present on Lys-340. Position 370 (Arg-370) interacts with NAD(+).

This sequence belongs to the zinc-containing alcohol dehydrogenase family. Class-I subfamily. As to quaternary structure, homodimer. Requires Zn(2+) as cofactor.

It is found in the cytoplasm. The enzyme catalyses a primary alcohol + NAD(+) = an aldehyde + NADH + H(+). It carries out the reaction a secondary alcohol + NAD(+) = a ketone + NADH + H(+). The polypeptide is Alcohol dehydrogenase 1 (ADH1) (Geomys attwateri (Attwater's pocket gopher)).